Here is a 309-residue protein sequence, read N- to C-terminus: Olfactory receptor 8U1 (309 aa).

The Extracellular segment spans residues 1–25 (MAHINCTQATEFILVGLTDHQELKM). An N-linked (GlcNAc...) asparagine glycan is attached at asparagine 5. The chain crosses the membrane as a helical span at residues 26–46 (PLFVLFLSIYLFTVVGNLGLI). Topologically, residues 47 to 54 (LLIRADTS) are cytoplasmic. Residues 55-75 (LNTPMYFFLSNLAFVDFCYSS) traverse the membrane as a helical segment. At 76–99 (VITPKMLGNFLYKQNVISFDACAT) the chain is on the extracellular side. A disulfide bridge connects residues cysteine 97 and cysteine 189. The helical transmembrane segment at 100–120 (QLGCFLTFMISESLLLASMAY) threads the bilayer. Over 121 to 139 (DRYVAICNPLLYMVVMTPG) the chain is Cytoplasmic. Residues 140 to 160 (ICIQLVAVPYSYSFLMALFHT) traverse the membrane as a helical segment. Residues 161 to 197 (ILTFRLSYCHSNIVNHFYCDDMPLLRLTCSDTRFKQL) are Extracellular-facing. The helical transmembrane segment at 198–217 (WIFACAGIMFISSLLIVFVS) threads the bilayer. The Cytoplasmic segment spans residues 218–237 (YMFIISAILRMHSAEGRQKA). A helical transmembrane segment spans residues 238–258 (FSTCGSHMLAVTIFYGTLIFM). Over 259 to 271 (YLQPSSSHALDTD) the chain is Extracellular. Residues 272-292 (KMASVFYTVIIPMLNPLIYSL) form a helical membrane-spanning segment. Over 293 to 309 (QNKEVKEALKKIIINKN) the chain is Cytoplasmic.

It belongs to the G-protein coupled receptor 1 family.

It localises to the cell membrane. Its function is as follows. Odorant receptor. The polypeptide is Olfactory receptor 8U1 (OR8U1) (Homo sapiens (Human)).